An 876-amino-acid chain; its full sequence is Serrate RNA effector molecule homolog (876 aa).

A disordered region spans residues 1 to 90 (MGDSDDEYDR…RRDWDEHSSD (90 aa)). The residue at position 2 (G2) is an N-acetylglycine. S4 is subject to Phosphoserine. Residue Y8 is modified to Phosphotyrosine. Residues 8–73 (YDRRRRDKFR…ERFSPPRHEL (66 aa)) show a composition bias toward basic and acidic residues. 3 positions are modified to phosphoserine: S67, S74, and S136. A Glycyl lysine isopeptide (Lys-Gly) (interchain with G-Cter in SUMO2) cross-link involves residue K150. The tract at residues 272 to 413 (EEEEQAGKPG…PKDAPGLECK (142 aa)) is disordered. Over residues 297-347 (DGERKANEKDDKKEDGKQAENESSSDDKIKKSEGDGDKEEKKEDSEKEAKK) the composition is skewed to basic and acidic residues. The span at 370 to 387 (SESESESGQAEEEKEEAD) shows a compositional bias: acidic residues. A compositionally biased stretch (basic and acidic residues) spans 388-413 (ETLKEKEKPKEEEREKPKDAPGLECK). S493 carries the phosphoserine modification. T544 carries the post-translational modification Phosphothreonine. The residue at position 570 (S570) is a Phosphoserine. Residues 575–597 (ELLGSSGGAPPEEPPKEGNPAEI) form a disordered region. T671 carries the post-translational modification Phosphothreonine. The residue at position 679 (S679) is a Phosphoserine. R833, R840, and R850 each carry omega-N-methylarginine. The disordered stretch occupies residues 835-854 (NYDAFRGQGGYPGKPRNRMV).

Belongs to the ARS2 family. In terms of assembly, interacts with CASP8AP2, ERBB4, NCBP1/CBP80 and DROSHA. Interacts with LUZP4. Interacts with NCBP2/CBP20 and NCBP3. Interacts with MTREX.

It localises to the nucleus. The protein resides in the nucleoplasm. It is found in the cytoplasm. Functionally, acts as a mediator between the cap-binding complex (CBC) and the primary microRNAs (miRNAs) processing machinery during cell proliferation. Contributes to the stability and delivery of capped primary miRNA transcripts to the primary miRNA processing complex containing DGCR8 and DROSHA, thereby playing a role in RNA-mediated gene silencing (RNAi) by miRNAs. Binds capped RNAs (m7GpppG-capped RNA); however interaction is probably mediated via its interaction with NCBP1/CBP80 component of the CBC complex. Involved in cell cycle progression at S phase. Does not directly confer arsenite resistance but rather modulates arsenic sensitivity. Independently of its activity on miRNAs, necessary and sufficient to promote neural stem cell self-renewal. Does so by directly binding SOX2 promoter and positively regulating its transcription. This Bos taurus (Bovine) protein is Serrate RNA effector molecule homolog (SRRT).